Here is a 442-residue protein sequence, read N- to C-terminus: Transcriptional coactivator YAP1 (442 aa).

Phosphoserine; by LATS1 and LATS2 is present on residues Ser21, Ser69, and Ser87. Disordered stretches follow at residues Leu51 to Pro89 and Val97 to Arg116. Phosphoserine; by LATS1 and LATS2 is present on Ser119. 2 consecutive WW domains span residues Met126–Lys159 and Gly186–Leu219. Residues Ile230–Asn254 are disordered. Over residues Gln238–Gly249 the composition is skewed to low complexity. The transactivation domain stretch occupies residues Gln247–Leu442. Positions Arg258–Arg279 form a coiled coil. Residues Arg286 to Thr374 form a disordered region. Composition is skewed to polar residues over residues Gln288 to Ser304, Arg313 to Tyr329, and Asp337 to Val347.

The protein belongs to the YAP1 family. Post-translationally, phosphorylated by lats1 and lats2; leading to cytoplasmic translocation and inactivation. In terms of tissue distribution, expressed in the notochord, brain, eyes, branchial arches and pectoral fins.

It is found in the cytoplasm. The protein localises to the nucleus. Its subcellular location is the cell junction. The protein resides in the tight junction. It localises to the cell membrane. Transcriptional regulator which can act both as a coactivator and a corepressor and is the critical downstream regulatory target in the Hippo signaling pathway that plays a pivotal role in organ size control and tumor suppression by restricting proliferation and promoting apoptosis. Required for expansion of the neural plate and neural plate border zone progenitor pools. Acts as a direct regulator of pax3 expression via interaction with tead1. Plays a key role in tissue tension and 3D tissue shape by regulating cortical actomyosin network formation. This Danio rerio (Zebrafish) protein is Transcriptional coactivator YAP1 (yap1).